The primary structure comprises 218 residues: MDFANERRAMIDLLVQRGIRDRRVLDAMAQVPRHAFVPENERSFAYSDQALPIGEGQTISQPYMVALMVEALQLAPTDRVLEVGAGSGYAAAVLSRIVAKVHTVECREALAERAVALIQALGYTNITVHIGDGTQGLPDYAPFDAILVSAASPWVPAPLREQLASSGRLVIPVGGRQAQILLRLRREGDTLRTERLCDVRFVPLIGGHAWTAERYPER.

S60 is a catalytic residue.

Belongs to the methyltransferase superfamily. L-isoaspartyl/D-aspartyl protein methyltransferase family.

The protein localises to the cytoplasm. The catalysed reaction is [protein]-L-isoaspartate + S-adenosyl-L-methionine = [protein]-L-isoaspartate alpha-methyl ester + S-adenosyl-L-homocysteine. Catalyzes the methyl esterification of L-isoaspartyl residues in peptides and proteins that result from spontaneous decomposition of normal L-aspartyl and L-asparaginyl residues. It plays a role in the repair and/or degradation of damaged proteins. The chain is Protein-L-isoaspartate O-methyltransferase from Roseiflexus sp. (strain RS-1).